The chain runs to 299 residues: Pyridoxal 5'-phosphate synthase subunit PdxS (299 aa).

Asp24 contacts D-ribose 5-phosphate. Lys81 functions as the Schiff-base intermediate with D-ribose 5-phosphate in the catalytic mechanism. Gly153 contacts D-ribose 5-phosphate. Arg165 contacts D-glyceraldehyde 3-phosphate. D-ribose 5-phosphate is bound by residues Gly219 and 240 to 241; that span reads GS.

It belongs to the PdxS/SNZ family. In the presence of PdxT, forms a dodecamer of heterodimers.

The enzyme catalyses aldehydo-D-ribose 5-phosphate + D-glyceraldehyde 3-phosphate + L-glutamine = pyridoxal 5'-phosphate + L-glutamate + phosphate + 3 H2O + H(+). It functions in the pathway cofactor biosynthesis; pyridoxal 5'-phosphate biosynthesis. In terms of biological role, catalyzes the formation of pyridoxal 5'-phosphate from ribose 5-phosphate (RBP), glyceraldehyde 3-phosphate (G3P) and ammonia. The ammonia is provided by the PdxT subunit. Can also use ribulose 5-phosphate and dihydroxyacetone phosphate as substrates, resulting from enzyme-catalyzed isomerization of RBP and G3P, respectively. This Methanococcus aeolicus (strain ATCC BAA-1280 / DSM 17508 / OCM 812 / Nankai-3) protein is Pyridoxal 5'-phosphate synthase subunit PdxS.